Consider the following 266-residue polypeptide: 4-hydroxy-tetrahydrodipicolinate reductase (266 aa).

NAD(+)-binding positions include 8-13 (GAAGRM) and Glu-33. NADP(+) is bound at residue Arg-34. NAD(+)-binding positions include 97–99 (GST) and 121–124 (APNM). His-154 functions as the Proton donor/acceptor in the catalytic mechanism. His-155 is a (S)-2,3,4,5-tetrahydrodipicolinate binding site. Lys-158 serves as the catalytic Proton donor. Residue 164 to 165 (GT) participates in (S)-2,3,4,5-tetrahydrodipicolinate binding.

The protein belongs to the DapB family.

The protein localises to the cytoplasm. It carries out the reaction (S)-2,3,4,5-tetrahydrodipicolinate + NAD(+) + H2O = (2S,4S)-4-hydroxy-2,3,4,5-tetrahydrodipicolinate + NADH + H(+). The enzyme catalyses (S)-2,3,4,5-tetrahydrodipicolinate + NADP(+) + H2O = (2S,4S)-4-hydroxy-2,3,4,5-tetrahydrodipicolinate + NADPH + H(+). It participates in amino-acid biosynthesis; L-lysine biosynthesis via DAP pathway; (S)-tetrahydrodipicolinate from L-aspartate: step 4/4. Its function is as follows. Catalyzes the conversion of 4-hydroxy-tetrahydrodipicolinate (HTPA) to tetrahydrodipicolinate. The sequence is that of 4-hydroxy-tetrahydrodipicolinate reductase from Trichlorobacter lovleyi (strain ATCC BAA-1151 / DSM 17278 / SZ) (Geobacter lovleyi).